A 510-amino-acid chain; its full sequence is Glycerol kinase (510 aa).

An ADP-binding site is contributed by Thr13. Thr13 and Thr14 together coordinate ATP. A sn-glycerol 3-phosphate-binding site is contributed by Thr13. Arg17 lines the ADP pocket. Sn-glycerol 3-phosphate is bound by residues Arg83, Glu84, Tyr135, and Asp255. Glycerol-binding residues include Arg83, Glu84, Tyr135, Asp255, and Gln256. Thr277, Gly321, Gly421, and Asn425 together coordinate ADP. Residues Thr277, Gly321, and Gly421 each coordinate ATP.

Belongs to the FGGY kinase family.

The catalysed reaction is glycerol + ATP = sn-glycerol 3-phosphate + ADP + H(+). It participates in polyol metabolism; glycerol degradation via glycerol kinase pathway; sn-glycerol 3-phosphate from glycerol: step 1/1. Key enzyme in the regulation of glycerol uptake and metabolism. Catalyzes the phosphorylation of glycerol to yield sn-glycerol 3-phosphate. The chain is Glycerol kinase from Haloarcula marismortui (strain ATCC 43049 / DSM 3752 / JCM 8966 / VKM B-1809) (Halobacterium marismortui).